The primary structure comprises 213 residues: Negative modulator of initiation of replication (213 aa).

3 interaction with DNA regions span residues 116–117 (AV), 145–149 (RTRVY), and 179–185 (NTNSGRK).

This sequence belongs to the SeqA family. Homodimer. Polymerizes to form helical filaments.

It is found in the cytoplasm. Negative regulator of replication initiation, which contributes to regulation of DNA replication and ensures that replication initiation occurs exactly once per chromosome per cell cycle. Binds to pairs of hemimethylated GATC sequences in the oriC region, thus preventing assembly of replication proteins and re-initiation at newly replicated origins. Repression is relieved when the region becomes fully methylated. The protein is Negative modulator of initiation of replication of Haemophilus parainfluenzae (strain T3T1).